Consider the following 240-residue polypeptide: DNA repair protein RecO (240 aa).

This sequence belongs to the RecO family.

Its function is as follows. Involved in DNA repair and RecF pathway recombination. The polypeptide is DNA repair protein RecO (Xanthomonas euvesicatoria pv. vesicatoria (strain 85-10) (Xanthomonas campestris pv. vesicatoria)).